We begin with the raw amino-acid sequence, 428 residues long: GTPase Obg (428 aa).

Positions Met1 to Leu158 constitute an Obg domain. The OBG-type G domain occupies Ala159–Glu328. Residues Gly165–Ser172, Phe190–Thr194, Asp212–Gly215, Thr282–Asp285, and Ser309–Val311 contribute to the GTP site. Residues Ser172 and Thr192 each contribute to the Mg(2+) site. The OCT domain occupies Tyr350–Asp428.

The protein belongs to the TRAFAC class OBG-HflX-like GTPase superfamily. OBG GTPase family. In terms of assembly, monomer. Requires Mg(2+) as cofactor.

It localises to the cytoplasm. Functionally, an essential GTPase which binds GTP, GDP and possibly (p)ppGpp with moderate affinity, with high nucleotide exchange rates and a fairly low GTP hydrolysis rate. Plays a role in control of the cell cycle, stress response, ribosome biogenesis and in those bacteria that undergo differentiation, in morphogenesis control. In Lactobacillus gasseri (strain ATCC 33323 / DSM 20243 / BCRC 14619 / CIP 102991 / JCM 1131 / KCTC 3163 / NCIMB 11718 / NCTC 13722 / AM63), this protein is GTPase Obg.